The sequence spans 353 residues: Peroxidase C1A (353 aa).

Positions 1–30 (MHFSSSSTLFTCITLIPLVCLILHASLSDA) are cleaved as a signal peptide. The residue at position 31 (Gln-31) is a Pyrrolidone carboxylic acid. 4 cysteine pairs are disulfide-bonded: Cys-41-Cys-121, Cys-74-Cys-79, Cys-127-Cys-331, and Cys-207-Cys-239. Asn-43 is a glycosylation site (N-linked (GlcNAc...) asparagine). The Proton acceptor role is filled by His-72. Asp-73, Val-76, Gly-78, Asp-80, and Ser-82 together coordinate Ca(2+). A glycan (N-linked (GlcNAc...) asparagine) is linked at Asn-87. Glu-94 is a binding site for Ca(2+). Pro-169 is a substrate binding site. The N-linked (GlcNAc...) asparagine glycan is linked to Asn-188. Position 200 (His-200) interacts with heme b. Thr-201 contacts Ca(2+). Asn-216, Asn-228, and Asn-244 each carry an N-linked (GlcNAc...) asparagine glycan. Ca(2+) contacts are provided by Asp-252, Thr-255, and Asp-260. 2 N-linked (GlcNAc...) asparagine glycosylation sites follow: Asn-285 and Asn-298. Positions 339 to 353 (LLHDMVEVVDFVSSM) are excised as a propeptide.

This sequence belongs to the peroxidase family. Classical plant (class III) peroxidase subfamily. In terms of assembly, monomer. Ca(2+) serves as cofactor. Requires heme b as cofactor.

The protein localises to the secreted. It localises to the vacuole. It carries out the reaction 2 a phenolic donor + H2O2 = 2 a phenolic radical donor + 2 H2O. Removal of H(2)O(2), oxidation of toxic reductants, biosynthesis and degradation of lignin, suberization, auxin catabolism, response to environmental stresses such as wounding, pathogen attack and oxidative stress. These functions might be dependent on each isozyme/isoform in each plant tissue. The polypeptide is Peroxidase C1A (PRXC1A) (Armoracia rusticana (Horseradish)).